A 996-amino-acid chain; its full sequence is NACHT, LRR and PYD domains-containing protein 9 (996 aa).

A Pyrin domain is found at 1 to 94 (MAESFFSDFG…WRKARNEIRQ (94 aa)). The NACHT domain occupies 150-469 (PTVVLHGPEG…FYMFTRPKDP (320 aa)). 156–163 (GPEGIGKT) lines the ATP pocket. LRR repeat units lie at residues 748–769 (KLNLLSLCENALKDDGVLVLCE), 777–798 (ALEALLLSHCCFSSAACDHLSQ), 805–825 (SLTFLDLGSNVLKDEGVTTLC), 834–855 (NLQELWLMNCYFTSVCCVDIAT), 862–883 (KLKTLKLGNNKIYDAGAKQLCK), and 891–914 (KLENLGLEACELSPASCEDLASAL).

This sequence belongs to the NLRP family. In terms of assembly, sensor component of NLRP9 inflammasomes. Inflammasomes are supramolecular complexes that assemble in the cytosol in response to pathogens, such as rotavirus, and play critical roles in innate immunity and inflammation. The core of NLRP9 inflammasomes consists of a signal sensor component (NLRP9), an adapter (ASC/PYCARD), which recruits an effector pro-inflammatory caspase (CASP1). Within the complex, NLRP9 and PYCARD interact via their respective DAPIN/pyrin domains. This interaction initiates speck formation (nucleation) which greatly enhances further addition of soluble PYCARD molecules to the speck in a prion-like polymerization process. Clustered PYCARD nucleates the formation of CASP1 filaments through the interaction of their respective CARD domains, acting as a platform for CASP1 polymerization. CASP1 filament formation increases local enzyme concentration, resulting in trans-autocleavage and activation. Active CASP1 then processes IL1B and IL18 precursors, leading to the release of mature cytokines in the extracellular milieu and inflammatory response. Interacts with DHX9 upon rotavirus infection; this interaction may trigger inflammasome activation and inflammatory response. Detected exclusively in testis and ovary, and at high level in the oocyte from antral follicles.

It localises to the cytoplasm. It is found in the inflammasome. In terms of biological role, as the sensor component of the NLRP9 inflammasome, plays a crucial role in innate immunity and inflammation. In response to pathogens, including rotavirus, initiates the formation of the inflammasome polymeric complex, made of NLRP9, PYCARD and CASP1. Recruitment of proCASP1 to the inflammasome promotes its activation and CASP1-catalyzed IL1B and IL18 maturation and release in the extracellular milieu. The active cytokines stimulate inflammatory responses. Inflammasomes can also induce pyroptosis, an inflammatory form of programmed cell death. NLRP9 inflammasome activation may be initiated by DHX9 interaction with viral double-stranded RNA (dsRNA), preferentially to short dsRNA segments. This chain is NACHT, LRR and PYD domains-containing protein 9 (NLRP9), found in Bos taurus (Bovine).